We begin with the raw amino-acid sequence, 837 residues long: Striatin-interacting protein 1 (837 aa).

At M1 the chain carries N-acetylmethionine. 2 disordered regions span residues 1–67 and 333–423; these read MEPA…ESPD and AASP…KGLP. Residues 18-35 are compositionally biased toward pro residues; the sequence is PQPPPPPPPATAQPPPGA. Basic and acidic residues predominate over residues 47–60; the sequence is KAREFNRNQRKDSE. 3 positions are modified to phosphoserine: S59, S335, and S339. Positions 356-377 are enriched in basic and acidic residues; it reads KALIKQDNLDAFNERDPYKADD. Acidic residues predominate over residues 378–391; that stretch reads SREEEEENDDDSSL. At S788 the chain carries Phosphoserine. The required for STRIPAK core complex formation stretch occupies residues 796–837; it reads DNCLQSVLGQRVDLPEDFQMNYDLWLEREVFSKPISWEELLQ.

Belongs to the STRIP family. Part of the core of STRIPAK complexes composed of PP2A catalytic and scaffolding subunits, the striatins (PP2A regulatory subunits), the striatin-associated proteins MOB4, STRIP1 and STRIP2, PDCD10 and members of the STE20 kinases, such as STK24 and STK26. The STRIPAK complex can be extended by adapter proteins such as SLMAP:SIKE1, CTTNBP2 or CTTNBP2NL. Interacts with CDC42BPB. Interacts with CTTNBP2NL.

The protein resides in the cytoplasm. Functionally, plays a role in the regulation of cell morphology and cytoskeletal organization. Required in the cortical actin filament dynamics and cell shape. Part of the striatin-interacting phosphatase and kinase (STRIPAK) complexes. STRIPAK complexes have critical roles in protein (de)phosphorylation and are regulators of multiple signaling pathways including Hippo, MAPK, nuclear receptor and cytoskeleton remodeling. Different types of STRIPAK complexes are involved in a variety of biological processes such as cell growth, differentiation, apoptosis, metabolism and immune regulation. In Mus musculus (Mouse), this protein is Striatin-interacting protein 1 (Strip1).